The sequence spans 422 residues: Golgi-associated RAB2 interactor protein 2 (422 aa).

A disordered region spans residues 353-404; that stretch reads PVESEANTSKEMKDKTSEEKMPDFQSTALKAEESRSLRTESNTSVLSPHIKS. Positions 360–374 are enriched in basic and acidic residues; it reads TSKEMKDKTSEEKMP.

The protein belongs to the GARIN family. Interacts with CALM1. In terms of tissue distribution, expressed in spermatozoa (at protein level).

It localises to the cell projection. The protein localises to the cilium. It is found in the flagellum. Its function is as follows. Seems to play a role in sperm motility. This is Golgi-associated RAB2 interactor protein 2 from Homo sapiens (Human).